Consider the following 290-residue polypeptide: uncharacterized protein (290 aa).

An AB hydrolase-1 domain is found at Pro-30–Thr-274. The active site involves His-269.

It belongs to the DmpD/TodF/XylF esterase family.

This is an uncharacterized protein from Saccharomyces cerevisiae (strain ATCC 204508 / S288c) (Baker's yeast).